The chain runs to 263 residues: S-methyl-5'-thioadenosine phosphorylase (263 aa).

Residues threonine 13, 55–56 (RH), and 88–89 (SA) each bind phosphate. Methionine 186 is a substrate binding site. Phosphate is bound at residue threonine 187. 210 to 212 (DYD) contributes to the substrate binding site.

This sequence belongs to the PNP/MTAP phosphorylase family. MTAP subfamily. In terms of assembly, homohexamer. Dimer of a homotrimer.

The enzyme catalyses S-methyl-5'-thioadenosine + phosphate = 5-(methylsulfanyl)-alpha-D-ribose 1-phosphate + adenine. It functions in the pathway amino-acid biosynthesis; L-methionine biosynthesis via salvage pathway; S-methyl-5-thio-alpha-D-ribose 1-phosphate from S-methyl-5'-thioadenosine (phosphorylase route): step 1/1. Catalyzes the reversible phosphorylation of S-methyl-5'-thioadenosine (MTA) to adenine and 5-methylthioribose-1-phosphate. Involved in the breakdown of MTA, a major by-product of polyamine biosynthesis. Responsible for the first step in the methionine salvage pathway after MTA has been generated from S-adenosylmethionine. Has broad substrate specificity with 6-aminopurine nucleosides as preferred substrates. The sequence is that of S-methyl-5'-thioadenosine phosphorylase from Nitrosopumilus maritimus (strain SCM1).